The chain runs to 246 residues: Probable transcriptional regulatory protein CKO_01097 (246 aa).

Residues 1–20 (MAGHSKWANTRHRKAAQDAK) form a disordered region.

The protein belongs to the TACO1 family.

It localises to the cytoplasm. The polypeptide is Probable transcriptional regulatory protein CKO_01097 (Citrobacter koseri (strain ATCC BAA-895 / CDC 4225-83 / SGSC4696)).